The chain runs to 463 residues: MSEEEAAQIPRSSVWEQDQQNVVQRVVALPLVRATCTAVCDVYSAAKDRHPLLGSACRLAENCVCGLTTRALDHAQPLLEHLQPQLATMNSLACRGLDKLEEKLPFLQQPSETVVTSAKDVVASSVTGVVDLARRGRRWSVELKRSVSHAVDVVLEKSEELVDHFLPMTEEELAALAAEAEGPEVGSVEDQRRQQGYFVRLGSLSARIRHLAYEHSVGKLRQSKHRAQDTLAQLQETLELIDHMQCGVTPTAPACPGKVHELWGEWGQRPPESRRRSQAELETLVLSRSLTQELQGTVEALESSVRGLPAGAQEKVAEVRRSVDALQTAFADARCFRDVPAAALAEGRGRVAHAHACVDELLELVVQAVPLPWLVGPFAPILVERPEPLPDLADLVDEVIGGPDPRWAHLDWPAQQRAWEAEHRDGSGNGDGDRMGVAGDICEQEPETPSCPVKHTLMPELDF.

The interval 1–108 (MSEEEAAQIP…KLEEKLPFLQ (108 aa)) is interaction with LIPE. Residues 1–173 (MSEEEAAQIP…HFLPMTEEEL (173 aa)) form an essential for lipid droplet targeting region. A phosphoserine mark is found at S2, S148, and S322. Residues 185 to 463 (VGSVEDQRRQ…KHTLMPELDF (279 aa)) are interaction with PNPLA2 and ABHD5. A recruits mitochondria at the lipid droplet surface region spans residues 444 to 463 (QEPETPSCPVKHTLMPELDF).

This sequence belongs to the perilipin family. In terms of assembly, homooligomer. Interacts with PNPLA2; prevents interaction of PNPLA2 with ABHD5. Interacts with ABHD5; targets ABHD5 to lipid droplets and promotes interaction of ABHD5 with PNPLA2. Interacts with LIPE. Phosphorylated by PKA. Phosphorylated on serine in skeletal muscle at rest or upon lipolytic stimulation. Expressed in skeletal muscle, liver, heart and kidney.

The protein resides in the lipid droplet. The protein localises to the cytoplasm. It localises to the mitochondrion. Its function is as follows. Lipid droplet-associated protein that maintains the balance between lipogenesis and lipolysis and also regulates fatty acid oxidation in oxidative tissues. Recruits mitochondria to the surface of lipid droplets and is involved in lipid droplet homeostasis by regulating both the storage of fatty acids in the form of triglycerides and the release of fatty acids for mitochondrial fatty acid oxidation. In lipid droplet triacylglycerol hydrolysis, plays a role as a scaffolding protein for three major key lipolytic players: ABHD5, PNPLA2 and LIPE. Reduces the triacylglycerol hydrolase activity of PNPLA2 by recruiting and sequestering PNPLA2 to lipid droplets. Phosphorylation by PKA enables lipolysis probably by promoting release of ABHD5 from the perilipin scaffold and by facilitating interaction of ABHD5 with PNPLA2. Also increases lipolysis through interaction with LIPE and upon PKA-mediated phosphorylation of LIPE. The protein is Perilipin-5 (PLIN5) of Homo sapiens (Human).